We begin with the raw amino-acid sequence, 149 residues long: Nucleoside diphosphate kinase (149 aa).

Residues Lys9, Phe57, Arg85, Thr91, Arg102, and Asn112 each contribute to the ATP site. The active-site Pros-phosphohistidine intermediate is the His115.

It belongs to the NDK family. As to quaternary structure, homotetramer. It depends on Mg(2+) as a cofactor.

It is found in the cytoplasm. The enzyme catalyses a 2'-deoxyribonucleoside 5'-diphosphate + ATP = a 2'-deoxyribonucleoside 5'-triphosphate + ADP. It carries out the reaction a ribonucleoside 5'-diphosphate + ATP = a ribonucleoside 5'-triphosphate + ADP. In terms of biological role, major role in the synthesis of nucleoside triphosphates other than ATP. The ATP gamma phosphate is transferred to the NDP beta phosphate via a ping-pong mechanism, using a phosphorylated active-site intermediate. The chain is Nucleoside diphosphate kinase from Desulfitobacterium hafniense (strain Y51).